A 793-amino-acid polypeptide reads, in one-letter code: Toll-like receptor 6 (793 aa).

Residues 1-23 form the signal peptide; it reads MIKDKESPIRSCHFVYIVALVFG. Topologically, residues 24–584 are extracellular; that stretch reads TIIQFSDESE…FQVSELSCNT (561 aa). LRR repeat units follow at residues 54-77, 78-101, 102-122, 123-147, 148-168, 169-196, 197-219, 220-250, 251-277, 278-303, 304-330, 331-354, 355-378, 379-404, 405-428, 429-449, 450-473, 474-495, and 496-519; these read TKVLDLSQNNISELHLSDISFLSG, LRVLRLSHNRIQGLDISIFKFNHD, LEYLDLSHNQLQKISCHPITT, TLKHLDLSFNDFDALPICKEFGNLT, QLNFLGLSATKLQQLDLLPIA, HLHLSCILLDLEDYMKENKKESLQILNT, KKLHLVFHPNSFFSVQVDISANS, LGCLQLTNIKLNDYNCQVLLKFLSGLTGGPT, LLNFTLNHVETTWKCLVKVFQFLWPKP, IEYLNIYNLTIVESIDEEVFTYYKTT, LKALKIEHITNKVFIFSQTALYTVFSE, MNILMLTISDTRFIHMLCPQEPST, FKFLNFTQNSFTDSVFQNCDTLAR, LETLILQKNELKDLFKTSLMTKDMLS, LETLDVSWNSLEYDRSNGNCSWVG, SIVVLNLSSNALTDSVFRCLP, PRIKVLDLHNNRIRSIPKDVTGLE, TLQELNLASNSLAHLPGCGIFS, and SLSILIIEHNSISNPSADFFQSCQ. The N-linked (GlcNAc...) asparagine glycan is linked to N63. Cysteines 117 and 140 form a disulfide. An N-linked (GlcNAc...) asparagine glycan is attached at N145. C235 and C265 are oxidised to a cystine. N-linked (GlcNAc...) asparagine glycans are attached at residues N253 and N285. C348 and C373 are oxidised to a cystine. A glycan (N-linked (GlcNAc...) asparagine) is linked at N359. 2 N-linked (GlcNAc...) asparagine glycosylation sites follow: N423 and N434. A disulfide bridge connects residues C424 and C447. Positions 520–575 constitute an LRRCT domain; it reads KIRSLKAGNNPFQCSCELRDFIQSVGQVSSDVVEGWPESYKCDYPESYKGTPLKDF. Residues 585-605 traverse the membrane as a helical segment; the sequence is ALLIITIVVPGLVLAVAVTVL. The Cytoplasmic segment spans residues 606-793; that stretch reads CIYLDLPWYL…KLMEKAAEIH (188 aa). Positions 640–781 constitute a TIR domain; it reads LQFHAFISYS…LFWANLRASI (142 aa).

This sequence belongs to the Toll-like receptor family. Homodimer (via cytoplasmic TIR domain). Heterodimer with TLR2 via their respective extracellular domains. Binds MYD88 via their respective TIR domains. Interacts with CD36, following CD36 stimulation by oxLDL or amyloid-beta 42, and forms a heterodimer with TLR4. The trimeric complex is internalized and triggers inflammatory response. LYN kinase activity facilitates TLR4-TLR6 heterodimerization and signal initiation. The heterodimer TLR2:TLR6 interacts with CD14 and CD36 in response to triacylated lipopeptides. In terms of tissue distribution, highest expression levels seen in blood and lymph node, intermediate expression seen in spleen and lowest expression seen in the liver, lung and udder cistern.

It localises to the cell membrane. Its subcellular location is the cytoplasmic vesicle. The protein resides in the phagosome membrane. It is found in the membrane raft. The protein localises to the golgi apparatus. Participates in the innate immune response to Gram-positive bacteria and fungi. Specifically recognizes diacylated and, to a lesser extent, triacylated lipopeptides. In response to diacylated lipopeptides, forms the activation cluster TLR2:TLR6:CD14:CD36, this cluster triggers signaling from the cell surface and subsequently is targeted to the Golgi in a lipid-raft dependent pathway. Acts via MYD88 and TRAF6, leading to NF-kappa-B activation, cytokine secretion and the inflammatory response. Recognizes mycoplasmal macrophage-activating lipopeptide-2kD (MALP-2), soluble tuberculosis factor (STF), phenol-soluble modulin (PSM) and B.burgdorferi outer surface protein A lipoprotein (OspA-L) cooperatively with TLR2. In complex with TLR4, promotes sterile inflammation in monocytes/macrophages in response to oxidized low-density lipoprotein (oxLDL) or amyloid-beta 42. In this context, the initial signal is provided by oxLDL- or amyloid-beta 42-binding to CD36. This event induces the formation of a heterodimer of TLR4 and TLR6, which is rapidly internalized and triggers inflammatory response, leading to the NF-kappa-B-dependent production of CXCL1, CXCL2 and CCL9 cytokines, via MYD88 signaling pathway, and CCL5 cytokine, via TICAM1 signaling pathway, as well as IL1B secretion. In Bos taurus (Bovine), this protein is Toll-like receptor 6.